Consider the following 633-residue polypeptide: MGKIIGIDLGTTNSCVSVMEGGEPKVIANVEGNRTTPSVVAFADNDERLVGMIAKRQAVTNPERTVYAAKRLIGRKFTDAEVQRSQEVSPFDIVEGISGSVAIQVEGHKYRPAEISAMVLGKMKQTAEEYLGEEVTEAVVTVPAYFNDSQRQATKDAGKIAGLDVKRIINEPTAASLAYGLDKKVEEKIAVFDLGGGTFDVSVLEIGDGVFEVKSTNGDTFLGGEDFDMRIVHWLADEFKREQGIDLRSDKMALQRLKEEAEKAKMELSTTVETDINLPFITADASGPKHLNIKLSRSKFETLVEDLVERTVGPCKTALKDAGLSASQIDEVILVGGMSRMPMVQKKVVEIFGKEPHKGVNPDEVVAIGAAIQGGVLQGDVKDVLLLDVTPLSLGIETLGGVTTKLIEKNTTVPTKKSQVFSTAADNQPAVSIHVLQGEREMAEGNKTIGRFELADIPTAPRGVPQIEVTFDLDANGILNVSAKDMGTGKEQSIKITASSGLTDEEIDRMTKDAELHADEDKKRKELVEARNSADGLIHSTEKTLKDLGDKVDAETKENVEKEIANVKTALEGDDVEAIKAAIEALTAASHKLAELMYQQASQETPGDGDAGAAGAKKKDDDDVVDADYEEVK.

Residue threonine 198 is modified to Phosphothreonine; by autocatalysis. A disordered region spans residues 599–633; sequence QQASQETPGDGDAGAAGAKKKDDDDVVDADYEEVK. Residues 622–633 show a composition bias toward acidic residues; sequence DDVVDADYEEVK.

Belongs to the heat shock protein 70 family.

Its function is as follows. Acts as a chaperone. The chain is Chaperone protein DnaK from Desulfotalea psychrophila (strain LSv54 / DSM 12343).